Reading from the N-terminus, the 252-residue chain is Imidazole glycerol phosphate synthase subunit HisF (252 aa).

Active-site residues include Asp11 and Asp130.

Belongs to the HisA/HisF family. In terms of assembly, heterodimer of HisH and HisF.

It localises to the cytoplasm. It catalyses the reaction 5-[(5-phospho-1-deoxy-D-ribulos-1-ylimino)methylamino]-1-(5-phospho-beta-D-ribosyl)imidazole-4-carboxamide + L-glutamine = D-erythro-1-(imidazol-4-yl)glycerol 3-phosphate + 5-amino-1-(5-phospho-beta-D-ribosyl)imidazole-4-carboxamide + L-glutamate + H(+). It participates in amino-acid biosynthesis; L-histidine biosynthesis; L-histidine from 5-phospho-alpha-D-ribose 1-diphosphate: step 5/9. Its function is as follows. IGPS catalyzes the conversion of PRFAR and glutamine to IGP, AICAR and glutamate. The HisF subunit catalyzes the cyclization activity that produces IGP and AICAR from PRFAR using the ammonia provided by the HisH subunit. In Desulforudis audaxviator (strain MP104C), this protein is Imidazole glycerol phosphate synthase subunit HisF.